The sequence spans 309 residues: Homoserine O-succinyltransferase (309 aa).

The active-site Acyl-thioester intermediate is cysteine 142. Lysine 163 and serine 192 together coordinate substrate. The active-site Proton acceptor is histidine 235. Glutamate 237 is an active-site residue. Arginine 249 is a binding site for substrate.

This sequence belongs to the MetA family. Homodimer.

It is found in the cytoplasm. The catalysed reaction is L-homoserine + succinyl-CoA = O-succinyl-L-homoserine + CoA. It participates in amino-acid biosynthesis; L-methionine biosynthesis via de novo pathway; O-succinyl-L-homoserine from L-homoserine: step 1/1. Transfers a succinyl group from succinyl-CoA to L-homoserine, forming succinyl-L-homoserine. This chain is Homoserine O-succinyltransferase, found in Escherichia coli O139:H28 (strain E24377A / ETEC).